Consider the following 818-residue polypeptide: Cation/H(+) antiporter 6A (818 aa).

The next 13 helical transmembrane spans lie at 51–71 (NFWE…FFIW), 88–110 (FTYM…KSWI), 123–143 (VAET…GVTM), 156–176 (SVIG…TFRY), 192–212 (LIIF…LKDL), 222–242 (IALS…FFNA), 248–268 (LYGF…ICVV), 288–308 (FYLY…NKVI), 310–330 (LFGP…YPLG), 340–360 (FNLG…VDLL), 376–396 (IYEV…VTTI), 409–429 (FALA…YTYA), and 438–458 (EVFT…PMLL).

It belongs to the monovalent cation:proton antiporter 2 (CPA2) transporter (TC 2.A.37) family. CHX (TC 2.A.37.4) subfamily. As to expression, preferentially expressed in pollen.

Its subcellular location is the membrane. In terms of biological role, may operate as a cation/H(+) antiporter. The chain is Cation/H(+) antiporter 6A (CHX6a) from Arabidopsis thaliana (Mouse-ear cress).